The sequence spans 75 residues: Small ribosomal subunit protein bS18 (75 aa).

It belongs to the bacterial ribosomal protein bS18 family. In terms of assembly, part of the 30S ribosomal subunit. Forms a tight heterodimer with protein bS6.

Functionally, binds as a heterodimer with protein bS6 to the central domain of the 16S rRNA, where it helps stabilize the platform of the 30S subunit. The chain is Small ribosomal subunit protein bS18 from Psychrobacter sp. (strain PRwf-1).